The chain runs to 859 residues: Leucine--tRNA ligase (859 aa).

Residues 42-52 (PYPSGRLHMGH) carry the 'HIGH' region motif. The short motif at 618–622 (KMSKS) is the 'KMSKS' region element. Lys-621 provides a ligand contact to ATP.

This sequence belongs to the class-I aminoacyl-tRNA synthetase family.

It is found in the cytoplasm. It catalyses the reaction tRNA(Leu) + L-leucine + ATP = L-leucyl-tRNA(Leu) + AMP + diphosphate. This Shewanella sp. (strain ANA-3) protein is Leucine--tRNA ligase.